The primary structure comprises 364 residues: DNA polymerase IV (364 aa).

Positions isoleucine 14–glycine 198 constitute a UmuC domain. Mg(2+) contacts are provided by aspartate 18 and aspartate 116. Glutamate 117 is a catalytic residue.

This sequence belongs to the DNA polymerase type-Y family. As to quaternary structure, monomer. The cofactor is Mg(2+).

It is found in the cytoplasm. The enzyme catalyses DNA(n) + a 2'-deoxyribonucleoside 5'-triphosphate = DNA(n+1) + diphosphate. Its function is as follows. Poorly processive, error-prone DNA polymerase involved in untargeted mutagenesis. Copies undamaged DNA at stalled replication forks, which arise in vivo from mismatched or misaligned primer ends. These misaligned primers can be extended by PolIV. Exhibits no 3'-5' exonuclease (proofreading) activity. May be involved in translesional synthesis, in conjunction with the beta clamp from PolIII. The sequence is that of DNA polymerase IV from Streptococcus agalactiae serotype Ia (strain ATCC 27591 / A909 / CDC SS700).